A 2138-amino-acid polypeptide reads, in one-letter code: DNA polymerase epsilon catalytic subunit B (2138 aa).

The Nuclear localization signal 1 signature appears at 1224–1231 (EKRKWKMT). Zn(2+)-binding residues include Cys2015, Cys2018, Cys2040, and Cys2045. The CysA-type zinc finger occupies 2015 to 2045 (CSNCGAYRDLDFCRDSALLTEKEWSCADPQC). Residues Cys2076, Cys2079, Cys2091, and Cys2093 each contribute to the [4Fe-4S] cluster site. Residues 2076–2093 (CNRCNQVKAAHLTEQCEC) carry the CysB motif motif. A Nuclear localization signal 2 motif is present at residues 2107–2114 (HKRIEIFL).

The protein belongs to the DNA polymerase type-B family. As to quaternary structure, heterotetramer. [4Fe-4S] cluster serves as cofactor. As to expression, mostly expressed at low levels in inflorescence (floral meristem and flowers until anthesis), and, to a lower extent, in seeds.

It localises to the nucleus. The enzyme catalyses DNA(n) + a 2'-deoxyribonucleoside 5'-triphosphate = DNA(n+1) + diphosphate. DNA polymerase II, which participates in chromosomal DNA replication. Involved in the determination of cell fate during plant embryogenesis. Contributes to the flowering time repression. The protein is DNA polymerase epsilon catalytic subunit B (POL2B) of Arabidopsis thaliana (Mouse-ear cress).